The primary structure comprises 153 residues: Nuclear cap-binding protein subunit 2 (153 aa).

MRNA contacts are provided by residues Y17, Y40, 109 to 113, 120 to 124, and 130 to 131; these read RTDWD, RQYGR, and QV. Positions 37-115 constitute an RRM domain; sequence CTLYVGNLSF…RIVRTDWDAG (79 aa).

Belongs to the RRM NCBP2 family. As to quaternary structure, component of the nuclear cap-binding complex (CBC), a heterodimer composed of ncbp1/cbp80 and ncbp2/cbp20 that interacts with m7GpppG-capped RNA.

The protein resides in the nucleus. It localises to the cytoplasm. Its function is as follows. Component of the cap-binding complex (CBC), which binds co-transcriptionally to the 5' cap of pre-mRNAs and is involved in various processes such as pre-mRNA splicing, translation regulation, nonsense-mediated mRNA decay, RNA-mediated gene silencing (RNAi) by microRNAs (miRNAs) and mRNA export. The CBC complex is involved in mRNA export from the nucleus, leading to the recruitment of the mRNA export machinery to the 5' end of mRNA and to mRNA export in a 5' to 3' direction through the nuclear pore. The CBC complex is also involved in mediating U snRNA and intronless mRNAs export from the nucleus. The CBC complex is essential for a pioneer round of mRNA translation, before steady state translation when the CBC complex is replaced by cytoplasmic cap-binding protein eIF4E. The pioneer round of mRNA translation mediated by the CBC complex plays a central role in nonsense-mediated mRNA decay (NMD), NMD only taking place in mRNAs bound to the CBC complex, but not on eIF4E-bound mRNAs. The CBC complex enhances NMD in mRNAs containing at least one exon-junction complex (EJC), promoting the interaction between upf1 and upf2. The CBC complex is also involved in 'failsafe' NMD, which is independent of the EJC complex, while it does not participate in Staufen-mediated mRNA decay (SMD). During cell proliferation, the CBC complex is also involved in microRNAs (miRNAs) biogenesis via its interaction with srrt/ars2, thereby being required for miRNA-mediated RNA interference. The CBC complex also acts as a negative regulator of parn, thereby acting as an inhibitor of mRNA deadenylation. In the CBC complex, ncbp2/cbp20 recognizes and binds capped RNAs (m7GpppG-capped RNA) but requires ncbp1/cbp80 to stabilize the movement of its N-terminal loop and lock the CBC into a high affinity cap-binding state with the cap structure. The conventional cap-binding complex with NCBP2 binds both small nuclear RNA (snRNA) and messenger (mRNA) and is involved in their export from the nucleus. This chain is Nuclear cap-binding protein subunit 2 (ncbp2), found in Xenopus laevis (African clawed frog).